We begin with the raw amino-acid sequence, 282 residues long: MTKILYGNEVALKIKEDLNLRMDKLKEKNIIPKLAILRMGNKQDDIAYERSIIKSCEKLNIETKVEELNEDILEEDFLKLMENLNNEKDIHGILVFRPYPKHLNENIINSSIALNKDVDCMHPLNLERIFEGDLDGVMPCTPEAVIEILKYYDIDLKGKNIVIINRSMVVGKPLSMMVLSNNATVTICHSKTIDLPSITKKADIVVTAIGKAKLIKEEYFNENSIIIDVSINVDENGKLCGDVDFENVKEKVGAITPVPKGVGSVTTTLLLKHIVEAAERNS.

NADP(+)-binding positions include 165–167 (NRS), S190, and I231.

Belongs to the tetrahydrofolate dehydrogenase/cyclohydrolase family. Homodimer.

It carries out the reaction (6R)-5,10-methylene-5,6,7,8-tetrahydrofolate + NADP(+) = (6R)-5,10-methenyltetrahydrofolate + NADPH. It catalyses the reaction (6R)-5,10-methenyltetrahydrofolate + H2O = (6R)-10-formyltetrahydrofolate + H(+). It participates in one-carbon metabolism; tetrahydrofolate interconversion. Catalyzes the oxidation of 5,10-methylenetetrahydrofolate to 5,10-methenyltetrahydrofolate and then the hydrolysis of 5,10-methenyltetrahydrofolate to 10-formyltetrahydrofolate. This is Bifunctional protein FolD from Clostridium botulinum (strain Okra / Type B1).